Reading from the N-terminus, the 339-residue chain is UDP-galactose transporter homolog 1 (339 aa).

Topologically, residues 1–4 (MAGS) are lumenal. The helical transmembrane segment at 5–25 (TSSLVICAIGIYATFLTWALV) threads the bilayer. At 26–42 (QEPLATRTWPNSMGKFQ) the chain is on the cytoplasmic side. A helical membrane pass occupies residues 43–63 (FPNVISLIQASVAMMMGYLYL). The Lumenal portion of the chain corresponds to 64 to 106 (NWKKVEYPPRKMIKDHWKQLMLISFTQSSSGPLATTSLKHVDY). Residues 107–127 (LTYMLAKSCKMIPVLLVHLLL) form a helical membrane-spanning segment. Topologically, residues 128–136 (YRTPIASQK) are cytoplasmic. The chain crosses the membrane as a helical span at residues 137–157 (KVVALLVSLGVTIFTIGGNDG). Over 158–174 (KKLKRSFNESGNDNKLQ) the chain is Lumenal. An N-linked (GlcNAc...) asparagine glycan is attached at Asn165. The chain crosses the membrane as a helical span at residues 175–192 (GFGLLFSSLFLDGLTNAT). At 193 to 214 (QDKLLKANKAKEKGKQTLITGA) the chain is on the cytoplasmic side. Residues 215-235 (HLMFTLNLFVILWNILYFIVI) form a helical membrane-spanning segment. Over 236 to 245 (DCKQWDNAVS) the chain is Lumenal. A helical transmembrane segment spans residues 246-266 (VLTMDPQVWGYLMLYSFCGAM). Topologically, residues 267–280 (GQCFIFYTLEQFGS) are cytoplasmic. A helical membrane pass occupies residues 281-303 (LVLIMITVTRKMVSMILSIIVFG). Residues 304–307 (KSVR) lie on the Lumenal side of the membrane. The helical transmembrane segment at 308 to 327 (FQQWVGMFIVFGGITWEALN) threads the bilayer. At 328-339 (KKKANIPKAKSA) the chain is on the cytoplasmic side.

It belongs to the nucleotide-sugar transporter family. SLC35B subfamily.

The protein localises to the endoplasmic reticulum membrane. Functionally, may be involved in specific transport of UDP-Gal from the cytosol to the Golgi lumen. Involved in the maintenance of optimal conditions for the folding of secretory pathway proteins in the endoplasmic reticulum. Overexpression confers resistance to the immunosuppressive drug, leflunomide. The sequence is that of UDP-galactose transporter homolog 1 (HUT1) from Saccharomyces cerevisiae (strain ATCC 204508 / S288c) (Baker's yeast).